Reading from the N-terminus, the 317-residue chain is MADQEVLVLRGTLEGHNGWVTSLATTPAHPDLLLSGSRDKTLIKWKLTGGEDNQYGIPKKSFKGHSHIVQDVTISADGAYALSASWDRTLRLWDLETGETTQRFVGHKGDVLSVSIAKNLRQIVSASRDKTVKVWNTIGECMATLTGHNDWVSAVRISPSDQSSTVISASWDKTVKSWDLADYSVNADFIGHTGYISCITLSPDGSLCASAGKDGVIILWDLNKNKTLYTLEAKAEVHALAFSPNRYWLAAATTSGIKIFKLQERSLLDELKPEFAVGATAKDPEAISLAWSADGQNLFAGYTDNVIRVWQVMTPSA.

WD repeat units follow at residues 15-55, 64-103, 106-146, 148-188, 191-230, 232-272, and 281-317; these read GHNG…DNQY, GHSH…TTQR, GHKG…ATLT, HNDW…VNAD, GHTG…TLYT, EAKA…DELK, and AKDP…TPSA.

This sequence belongs to the WD repeat G protein beta family. Ribosomal protein RACK1 subfamily. Component of the small ribosomal subunit. Mature ribosomes consist of a small (40S) and a large (60S) subunit. The 40S subunit contains about 32 different proteins and 1 molecule of RNA (18S). The 60S subunit contains 45 different proteins and 3 molecules of RNA (25S, 5.8S and 5S).

It localises to the cytoplasm. Component of the ribosome, a large ribonucleoprotein complex responsible for the synthesis of proteins in the cell. The small ribosomal subunit (SSU) binds messenger RNAs (mRNAs) and translates the encoded message by selecting cognate aminoacyl-transfer RNA (tRNA) molecules. The large subunit (LSU) contains the ribosomal catalytic site termed the peptidyl transferase center (PTC), which catalyzes the formation of peptide bonds, thereby polymerizing the amino acids delivered by tRNAs into a polypeptide chain. The nascent polypeptides leave the ribosome through a tunnel in the LSU and interact with protein factors that function in enzymatic processing, targeting, and the membrane insertion of nascent chains at the exit of the ribosomal tunnel. Located at the head of the 40S ribosomal subunit in the vicinity of the mRNA exit channel, it serves as a scaffold protein that can recruit other proteins to the ribosome. Involved in the negative regulation of translation of a specific subset of proteins. Plays a role in morphogenesis and pathogenesis. This chain is Small ribosomal subunit protein RACK1, found in Candida albicans (strain SC5314 / ATCC MYA-2876) (Yeast).